A 177-amino-acid chain; its full sequence is MAAFTCTSSPPISLRSEMMIASSKTVSLSTRQMFSVGGLRTRVSLSSVSKNSRASRLRRGGIICEAQDTATGIPMVNDSTWESLVLKADEPVVVDFWAPWCGPCKMIDPIVNELAQQYTGKIKFFKLNTDDSPATPGKYGVRSIPTIMIFVKGEKKDTIIGAVPKTTLATSIDKFLQ.

A chloroplast-targeting transit peptide spans 1–64 (MAAFTCTSSP…SRLRRGGIIC (64 aa)). Residues 65 to 177 (EAQDTATGIP…LATSIDKFLQ (113 aa)) form the Thioredoxin domain. Catalysis depends on nucleophile residues C101 and C104. C101 and C104 are oxidised to a cystine.

This sequence belongs to the thioredoxin family. Plant M-type subfamily. Forms a complex with heterodimeric ferredoxin-thioredoxin reductase (FTR) and ferredoxin.

It localises to the plastid. The protein localises to the chloroplast. In terms of biological role, participates in various redox reactions through the reversible oxidation of the active center dithiol to a disulfide. The M form is known to activate NADP-malate dehydrogenase. The polypeptide is Thioredoxin M-type, chloroplastic (Brassica napus (Rape)).